A 35-amino-acid chain; its full sequence is Entry-fusion complex protein OPG076 (35 aa).

Residues 2-22 traverse the membrane as a helical segment; that stretch reads LVVIMFFIAFAFCSWLSYSYL. The Virion surface portion of the chain corresponds to 23 to 35; sequence RPYISTKELNKSR.

This sequence belongs to the orthopoxvirus OPG076 family. In terms of assembly, component of the entry fusion complex (EFC) composed of OPG053, OPG076, OPG086, OPG094, OPG095, OPG099, OPG107, OPG143, OPG104, OPG147 and OPG155. Except for OPG095 and OPG053, each of the EFC proteins is required for assembly or stability of the complex. Post-translationally, unglycosylated because produced in viral factories instead of the classic ER -Golgi route.

The protein localises to the virion membrane. Functionally, component of the entry fusion complex (EFC), which consists of 11 proteins. During cell infection, this complex mediates entry of the virion core into the host cytoplasm by a two-step mechanism consisting of lipid mixing of the viral and cellular membranes and subsequent pore formation. The chain is Entry-fusion complex protein OPG076 (OPG076) from Vaccinia virus (strain Copenhagen) (VACV).